The following is a 374-amino-acid chain: MMTDNSKTRVVVGMSGGVDSSVTALLLKEQGYDVIGVFMKNWDDTDEFGVCTATEDYKDVAAVADQIGIPYYSVNFEKEYWDRVFEYFLAEYRSGRTPNPDVMCNKEIKFKAFLDYAMTLGADYVATGHYAQIKRDENGVVHMLRGLDKGKDQTYFLSQLSQEQLQKTMFPLGHLQKSEVRAIAEQAGLATAKKKDSTGICFISEKNFKTFLSHYLPAQKGRMMTVDGRDMGEHAGLMYYTIGQRGGLGIGGQQGGDNKPWFVVGKDLSQNILYVGQGFYHESLMSTSLDASVIQFTREVPEEFTLECTAKFRYRQPDSKVTVHVKKDKAKVVFAEPQRAITPGQAVVFYDGHECLGGGIIDMAYKDGEPCQYI.

ATP-binding positions include 13–20 and M39; that span reads GMSGGVDS. Positions 99–101 are interaction with target base in tRNA; the sequence is NPD. C104 serves as the catalytic Nucleophile. A disulfide bridge links C104 with C201. G128 lines the ATP pocket. An interaction with tRNA region spans residues 151–153; the sequence is KDQ. The Cysteine persulfide intermediate role is filled by C201. Residues 313–314 form an interaction with tRNA region; it reads RY.

The protein belongs to the MnmA/TRMU family.

It localises to the cytoplasm. The catalysed reaction is S-sulfanyl-L-cysteinyl-[protein] + uridine(34) in tRNA + AH2 + ATP = 2-thiouridine(34) in tRNA + L-cysteinyl-[protein] + A + AMP + diphosphate + H(+). Functionally, catalyzes the 2-thiolation of uridine at the wobble position (U34) of tRNA, leading to the formation of s(2)U34. The chain is tRNA-specific 2-thiouridylase MnmA from Streptococcus equi subsp. equi (strain 4047).